The following is a 295-amino-acid chain: Bifunctional protein FolD (295 aa).

NADP(+) is bound by residues 166–168, serine 191, and isoleucine 232; that span reads GRS.

This sequence belongs to the tetrahydrofolate dehydrogenase/cyclohydrolase family. Homodimer.

The enzyme catalyses (6R)-5,10-methylene-5,6,7,8-tetrahydrofolate + NADP(+) = (6R)-5,10-methenyltetrahydrofolate + NADPH. The catalysed reaction is (6R)-5,10-methenyltetrahydrofolate + H2O = (6R)-10-formyltetrahydrofolate + H(+). Its pathway is one-carbon metabolism; tetrahydrofolate interconversion. Catalyzes the oxidation of 5,10-methylenetetrahydrofolate to 5,10-methenyltetrahydrofolate and then the hydrolysis of 5,10-methenyltetrahydrofolate to 10-formyltetrahydrofolate. This chain is Bifunctional protein FolD, found in Rhodopseudomonas palustris (strain BisA53).